A 260-amino-acid polypeptide reads, in one-letter code: Imidazole glycerol phosphate synthase subunit HisF (260 aa).

Catalysis depends on residues Asp-11 and Asp-130.

Belongs to the HisA/HisF family. As to quaternary structure, heterodimer of HisH and HisF.

Its subcellular location is the cytoplasm. The catalysed reaction is 5-[(5-phospho-1-deoxy-D-ribulos-1-ylimino)methylamino]-1-(5-phospho-beta-D-ribosyl)imidazole-4-carboxamide + L-glutamine = D-erythro-1-(imidazol-4-yl)glycerol 3-phosphate + 5-amino-1-(5-phospho-beta-D-ribosyl)imidazole-4-carboxamide + L-glutamate + H(+). It participates in amino-acid biosynthesis; L-histidine biosynthesis; L-histidine from 5-phospho-alpha-D-ribose 1-diphosphate: step 5/9. Functionally, IGPS catalyzes the conversion of PRFAR and glutamine to IGP, AICAR and glutamate. The HisF subunit catalyzes the cyclization activity that produces IGP and AICAR from PRFAR using the ammonia provided by the HisH subunit. This is Imidazole glycerol phosphate synthase subunit HisF from Endomicrobium trichonymphae.